Here is a 108-residue protein sequence, read N- to C-terminus: Phosphoribosyl-AMP cyclohydrolase (108 aa).

Asp78 is a binding site for Mg(2+). Residue Cys79 coordinates Zn(2+). Positions 80 and 82 each coordinate Mg(2+). Zn(2+) is bound by residues Cys95 and Cys102.

Belongs to the PRA-CH family. Homodimer. Requires Mg(2+) as cofactor. Zn(2+) is required as a cofactor.

Its subcellular location is the cytoplasm. It catalyses the reaction 1-(5-phospho-beta-D-ribosyl)-5'-AMP + H2O = 1-(5-phospho-beta-D-ribosyl)-5-[(5-phospho-beta-D-ribosylamino)methylideneamino]imidazole-4-carboxamide. The protein operates within amino-acid biosynthesis; L-histidine biosynthesis; L-histidine from 5-phospho-alpha-D-ribose 1-diphosphate: step 3/9. Catalyzes the hydrolysis of the adenine ring of phosphoribosyl-AMP. The chain is Phosphoribosyl-AMP cyclohydrolase from Cenarchaeum symbiosum (strain A).